The primary structure comprises 58 residues: Ribulose bisphosphate carboxylase large chain (58 aa).

A propeptide spanning residues Met1–Ser2 is cleaved from the precursor. The residue at position 3 (Pro3) is an N-acetylproline. At Lys14 the chain carries N6,N6,N6-trimethyllysine.

This sequence belongs to the RuBisCO large chain family. Type I subfamily. In terms of assembly, heterohexadecamer of 8 large chains and 8 small chains.

The protein localises to the plastid. It is found in the chloroplast. It carries out the reaction 2 (2R)-3-phosphoglycerate + 2 H(+) = D-ribulose 1,5-bisphosphate + CO2 + H2O. The catalysed reaction is D-ribulose 1,5-bisphosphate + O2 = 2-phosphoglycolate + (2R)-3-phosphoglycerate + 2 H(+). Functionally, ruBisCO catalyzes two reactions: the carboxylation of D-ribulose 1,5-bisphosphate, the primary event in carbon dioxide fixation, as well as the oxidative fragmentation of the pentose substrate in the photorespiration process. Both reactions occur simultaneously and in competition at the same active site. The polypeptide is Ribulose bisphosphate carboxylase large chain (rbcL) (Rosa damascena (Damask rose)).